A 190-amino-acid chain; its full sequence is Putative glutathione-dependent formaldehyde-activating enzyme (190 aa).

The region spanning 19 to 165 (FKGGKLYCHC…FRKVGLQPYD (147 aa)) is the CENP-V/GFA domain. Zn(2+)-binding residues include C26, C28, C47, C49, C52, C94, and C97.

Belongs to the Gfa family. The cofactor is Zn(2+).

It carries out the reaction S-(hydroxymethyl)glutathione = glutathione + formaldehyde. It functions in the pathway one-carbon metabolism; formaldehyde degradation; formate from formaldehyde (glutathione route): step 1/3. Its function is as follows. Catalyzes the condensation of formaldehyde and glutathione to S-hydroxymethylglutathione. In Pyrenophora teres f. teres (strain 0-1) (Barley net blotch fungus), this protein is Putative glutathione-dependent formaldehyde-activating enzyme.